We begin with the raw amino-acid sequence, 286 residues long: Flagellar filament 31.3 kDa core protein (286 aa).

Belongs to the bacterial flagellin family. The core of the flagellum consists of several antigenically related polypeptides. Post-translationally, glycosylated. Glycosylation is not essential for motility.

It localises to the periplasmic flagellum. The protein resides in the periplasm. Component of the core of the flagella. This is Flagellar filament 31.3 kDa core protein (flaB2) from Treponema maltophilum.